The following is a 442-amino-acid chain: 2-oxoisovalerate dehydrogenase subunit alpha, mitochondrial (442 aa).

A mitochondrion-targeting transit peptide spans 1-42 (MSAAKIWRPSRGLRQAALLLLGRSGVRGLARSHPSRQQQQQF). A disordered region spans residues 30–50 (ARSHPSRQQQQQFPSLDDKPQ). Residues Tyr155 and Arg156 each coordinate thiamine diphosphate. A K(+)-binding site is contributed by Ser203. Ser204 is a binding site for thiamine diphosphate. The K(+) site is built by Pro205, Thr208, and Gln209. Mg(2+) is bound at residue Glu235. Thiamine diphosphate is bound by residues Gly236, Ala237, and Arg262. Mg(2+) is bound by residues Asn264 and Tyr266. Position 333 (His333) interacts with thiamine diphosphate. Ser334 bears the Phosphoserine; by BCKDK mark. Residue Thr335 is modified to Phosphothreonine. Ser336 and Ser344 each carry phosphoserine. N6-acetyllysine; alternate is present on Lys353. Lys353 carries the post-translational modification N6-succinyllysine; alternate. Lys377 bears the N6-succinyllysine mark.

It belongs to the BCKDHA family. In terms of assembly, heterotetramer of 2 alpha/BCKDHA and 2 beta chains/BCKDHB that forms the branched-chain alpha-keto acid decarboxylase (E1) component of the BCKD complex. The branched-chain alpha-ketoacid dehydrogenase is a large complex composed of three major building blocks E1, E2 and E3. It is organized around E2, a 24-meric cubic core composed of DBT, to which are associated 6 to 12 copies of E1, and approximately 6 copies of the dehydrogenase E3, a DLD dimer. Interacts with PPM1K. The cofactor is thiamine diphosphate. Requires Mg(2+) as cofactor. In terms of processing, phosphorylated at Ser-334 by BCKDK and dephosphorylated by protein phosphatase PPM1K.

The protein resides in the mitochondrion matrix. It carries out the reaction N(6)-[(R)-lipoyl]-L-lysyl-[protein] + 3-methyl-2-oxobutanoate + H(+) = N(6)-[(R)-S(8)-2-methylpropanoyldihydrolipoyl]-L-lysyl-[protein] + CO2. In terms of biological role, together with BCKDHB forms the heterotetrameric E1 subunit of the mitochondrial branched-chain alpha-ketoacid dehydrogenase (BCKD) complex. The BCKD complex catalyzes the multi-step oxidative decarboxylation of alpha-ketoacids derived from the branched-chain amino-acids valine, leucine and isoleucine producing CO2 and acyl-CoA which is subsequently utilized to produce energy. The E1 subunit catalyzes the first step with the decarboxylation of the alpha-ketoacid forming an enzyme-product intermediate. A reductive acylation mediated by the lipoylamide cofactor of E2 extracts the acyl group from the E1 active site for the next step of the reaction. This is 2-oxoisovalerate dehydrogenase subunit alpha, mitochondrial from Mus musculus (Mouse).